We begin with the raw amino-acid sequence, 298 residues long: Dihydrodipicolinate reductase-like protein CRR1, chloroplastic (298 aa).

The transit peptide at 1–25 directs the protein to the chloroplast; sequence MAAVNCHFFQLSRHLKPSRPSFSCS. 160–163 lines the NAD(+) pocket; sequence APTL.

Belongs to the DapB family. Expressed specifically in leaves.

The protein localises to the plastid. Its subcellular location is the chloroplast stroma. In terms of biological role, dihydrodipicolinate reductase (DHPR)-like protein that may not function as DHPR in lysine biosynthesis. Required for both formation and activity of the chloroplast NAD(P)H dehydrogenase (NDH) complex of the photosynthetic electron transport chain. May function in assembly or stabilization of the NDH complex. This is Dihydrodipicolinate reductase-like protein CRR1, chloroplastic from Arabidopsis thaliana (Mouse-ear cress).